Consider the following 228-residue polypeptide: Uracil-DNA glycosylase (228 aa).

The Proton acceptor role is filled by D64.

Belongs to the uracil-DNA glycosylase (UDG) superfamily. UNG family.

The protein resides in the cytoplasm. The enzyme catalyses Hydrolyzes single-stranded DNA or mismatched double-stranded DNA and polynucleotides, releasing free uracil.. Functionally, excises uracil residues from the DNA which can arise as a result of misincorporation of dUMP residues by DNA polymerase or due to deamination of cytosine. The sequence is that of Uracil-DNA glycosylase from Yersinia pestis bv. Antiqua (strain Antiqua).